A 301-amino-acid polypeptide reads, in one-letter code: Cilia- and flagella-associated protein 161 (301 aa).

It localises to the cytoplasm. The protein localises to the cytoskeleton. The protein resides in the cilium axoneme. In terms of biological role, microtubule inner protein (MIP) part of the dynein-decorated doublet microtubules (DMTs) in cilia axoneme, which is required for motile cilia beating. The protein is Cilia- and flagella-associated protein 161 of Danio rerio (Zebrafish).